The chain runs to 121 residues: Large ribosomal subunit protein bL17 (121 aa).

Belongs to the bacterial ribosomal protein bL17 family. As to quaternary structure, part of the 50S ribosomal subunit. Contacts protein L32.

This Rubrobacter xylanophilus (strain DSM 9941 / JCM 11954 / NBRC 16129 / PRD-1) protein is Large ribosomal subunit protein bL17.